The chain runs to 275 residues: Large ribosomal subunit protein uL2 (275 aa).

Disordered stretches follow at residues 222-243 (GSVM…PIGR) and 256-275 (GGKT…KRKP).

It belongs to the universal ribosomal protein uL2 family. As to quaternary structure, part of the 50S ribosomal subunit. Forms a bridge to the 30S subunit in the 70S ribosome.

In terms of biological role, one of the primary rRNA binding proteins. Required for association of the 30S and 50S subunits to form the 70S ribosome, for tRNA binding and peptide bond formation. It has been suggested to have peptidyltransferase activity; this is somewhat controversial. Makes several contacts with the 16S rRNA in the 70S ribosome. This is Large ribosomal subunit protein uL2 from Syntrophomonas wolfei subsp. wolfei (strain DSM 2245B / Goettingen).